The chain runs to 606 residues: 4-hydroxy-3-methylbut-2-en-1-yl diphosphate synthase (flavodoxin) (606 aa).

4 residues coordinate [4Fe-4S] cluster: Cys-513, Cys-516, Cys-547, and Glu-554.

It belongs to the IspG family. It depends on [4Fe-4S] cluster as a cofactor.

It catalyses the reaction (2E)-4-hydroxy-3-methylbut-2-enyl diphosphate + oxidized [flavodoxin] + H2O + 2 H(+) = 2-C-methyl-D-erythritol 2,4-cyclic diphosphate + reduced [flavodoxin]. It participates in isoprenoid biosynthesis; isopentenyl diphosphate biosynthesis via DXP pathway; isopentenyl diphosphate from 1-deoxy-D-xylulose 5-phosphate: step 5/6. In terms of biological role, converts 2C-methyl-D-erythritol 2,4-cyclodiphosphate (ME-2,4cPP) into 1-hydroxy-2-methyl-2-(E)-butenyl 4-diphosphate. The protein is 4-hydroxy-3-methylbut-2-en-1-yl diphosphate synthase (flavodoxin) of Chlamydia felis (strain Fe/C-56) (Chlamydophila felis).